Consider the following 546-residue polypeptide: Amidophosphoribosyltransferase (546 aa).

Residues 1–26 show a composition bias toward low complexity; it reads MSAPQQQQQSQQKQQQHVRVVEQQQV. Positions 1–39 are disordered; that stretch reads MSAPQQQQQSQQKQQQHVRVVEQQQVEPAEAVTSSMESE. The propeptide occupies 1–53; sequence MSAPQQQQQSQQKQQQHVRVVEQQQVEPAEAVTSSMESESISASKELTGLTHE. Residue Cys54 is the Nucleophile of the active site. The 249-residue stretch at 54-302 folds into the Glutamine amidotransferase type-2 domain; it reads CGVFGAIACG…PGEIVELSRS (249 aa). The residue at position 113 (Ser113) is a Phosphoserine. Phosphothreonine is present on Thr114. Ser120 bears the Phosphoserine mark. [4Fe-4S] cluster is bound at residue Cys321. Mg(2+)-binding residues include Ser368, Asp430, and Asp431. [4Fe-4S] cluster contacts are provided by Cys467, Cys528, and Cys531.

This sequence in the C-terminal section; belongs to the purine/pyrimidine phosphoribosyltransferase family. Mg(2+) is required as a cofactor. The cofactor is [4Fe-4S] cluster.

The catalysed reaction is 5-phospho-beta-D-ribosylamine + L-glutamate + diphosphate = 5-phospho-alpha-D-ribose 1-diphosphate + L-glutamine + H2O. It functions in the pathway purine metabolism; IMP biosynthesis via de novo pathway; N(1)-(5-phospho-D-ribosyl)glycinamide from 5-phospho-alpha-D-ribose 1-diphosphate: step 1/2. Functionally, involved in the first step (and regulatory point) of the de novo biosynthesis of purine nucleotides, where it catalyzes the transfer of glutamine amide to 5-phospho-alpha-D-ribose 1-diphosphate. This Drosophila melanogaster (Fruit fly) protein is Amidophosphoribosyltransferase (Prat).